Reading from the N-terminus, the 81-residue chain is uncharacterized protein (81 aa).

Positions 1 to 45 (MRTTIDVAGRLVIPKRIRERLGLRGNDQVEITERDGRIEIEPAPT) constitute a SpoVT-AbrB domain.

It to B.subtilis SpoVT.

This is an uncharacterized protein from Mycobacterium bovis (strain ATCC BAA-935 / AF2122/97).